The chain runs to 147 residues: Arginine vasopressin-induced protein 1 (147 aa).

Disordered stretches follow at residues 1–27 (MGTP…KQAS) and 99–147 (EPHS…QIRH). Over residues 108–119 (QSATETASTEQY) the composition is skewed to polar residues. Over residues 121–134 (HSRRKSARIRRNWK) the composition is skewed to basic residues.

Functionally, may be involved in MAP kinase activation, epithelial sodium channel (ENaC) down-regulation and cell cycling. This chain is Arginine vasopressin-induced protein 1 (AVPI1), found in Pongo abelii (Sumatran orangutan).